The sequence spans 434 residues: Alpha-enolase (434 aa).

Residue serine 2 is modified to N-acetylserine. Lysine 5 carries the post-translational modification N6-acetyllysine. Serine 40 contributes to the Mg(2+) binding site. Position 44 is a phosphotyrosine (tyrosine 44). Lysine 60 is subject to N6-acetyllysine; alternate. At lysine 60 the chain carries N6-succinyllysine; alternate. N6-acetyllysine is present on residues lysine 64 and lysine 71. The residue at position 89 (lysine 89) is an N6-acetyllysine; alternate. The residue at position 89 (lysine 89) is an N6-succinyllysine; alternate. N6-acetyllysine is present on lysine 126. The substrate site is built by histidine 158 and glutamate 167. N6-acetyllysine is present on residues lysine 193 and lysine 199. Lysine 202 carries the post-translational modification N6-acetyllysine; alternate. Lysine 202 is covalently cross-linked (Glycyl lysine isopeptide (Lys-Gly) (interchain with G-Cter in SUMO2); alternate). The Proton donor role is filled by glutamate 210. N6-acetyllysine; alternate is present on residues lysine 228 and lysine 233. At lysine 228 the chain carries N6-succinyllysine; alternate. Lysine 228 bears the N6-(2-hydroxyisobutyryl)lysine; alternate mark. Lysine 233 is subject to N6-malonyllysine; alternate. Aspartate 245 is a binding site for Mg(2+). Lysine 256 bears the N6-acetyllysine mark. Residue serine 263 is modified to Phosphoserine. Position 281 is an N6-acetyllysine; alternate (lysine 281). An N6-(2-hydroxyisobutyryl)lysine; alternate modification is found at lysine 281. Lysine 285 is modified (N6-acetyllysine). Position 287 is a phosphotyrosine (tyrosine 287). A Phosphoserine modification is found at serine 291. Residues glutamate 293 and aspartate 318 each contribute to the Mg(2+) site. Glutamate 293 and aspartate 318 together coordinate substrate. Lysine 335 and lysine 343 each carry N6-acetyllysine. The active-site Proton acceptor is lysine 343. Residues 370–373 (SHRS) and lysine 394 contribute to the substrate site. A required for interaction with PLG region spans residues 405 to 434 (AKYNQILRIEEELGSKAKFAGRSFRNPLAK). An N6-acetyllysine modification is found at lysine 406. Lysine 420 is modified (N6-acetyllysine; alternate). N6-succinyllysine; alternate is present on lysine 420. Lysine 420 is modified (N6-malonyllysine; alternate).

This sequence belongs to the enolase family. Mammalian enolase is composed of 3 isozyme subunits, alpha, beta and gamma, which can form homodimers or heterodimers which are cell-type and development-specific. ENO1 interacts with PLG in the neuronal plasma membrane and promotes its activation. The C-terminal lysine is required for this binding. Interacts with ENO4 and PGAM2. Interacts with CMTM6. Mg(2+) is required as a cofactor. ISGylated. In terms of processing, lysine 2-hydroxyisobutyrylation (Khib) by p300/EP300 activates the phosphopyruvate hydratase activity. In terms of tissue distribution, expressed in flagella of epididymal sperm. The alpha/alpha homodimer is expressed in embryo and in most adult tissues. The alpha/beta heterodimer and the beta/beta homodimer are found in striated muscle, and the alpha/gamma heterodimer and the gamma/gamma homodimer in neurons.

The protein localises to the cytoplasm. It is found in the cell membrane. The catalysed reaction is (2R)-2-phosphoglycerate = phosphoenolpyruvate + H2O. It participates in carbohydrate degradation; glycolysis; pyruvate from D-glyceraldehyde 3-phosphate: step 4/5. In terms of biological role, glycolytic enzyme that catalyzes the conversion of 2-phosphoglycerate to phosphoenolpyruvate. In addition to glycolysis, involved in various processes such as growth control, hypoxia tolerance and allergic responses. May also function in the intravascular and pericellular fibrinolytic system due to its ability to serve as a receptor and activator of plasminogen on the cell surface of several cell-types such as leukocytes and neurons. Stimulates immunoglobulin production. This chain is Alpha-enolase (Eno1), found in Rattus norvegicus (Rat).